Reading from the N-terminus, the 129-residue chain is MNRRLKNYLSVGIFAFFGGGLRAYLNLIWSQTGTLTANIIGCFLLAFFTYFFVEYREGRDWLVTGLSTGFVGSFTTFSSFNLDTLKQLESGMNSQATIYFFSSIFIGFLFAYLGMLVGKRTGRKLAEKA.

Helical transmembrane passes span 9–29, 33–53, 62–82, and 98–118; these read LSVG…NLIW, GTLT…YFFV, LVTG…SFNL, and IYFF…MLVG. Residues glycine 72 and threonine 75 each contribute to the Na(+) site.

Belongs to the fluoride channel Fluc/FEX (TC 1.A.43) family.

The protein resides in the cell membrane. It catalyses the reaction fluoride(in) = fluoride(out). Na(+) is not transported, but it plays an essential structural role and its presence is essential for fluoride channel function. Functionally, fluoride-specific ion channel. Important for reducing fluoride concentration in the cell, thus reducing its toxicity. This is Fluoride-specific ion channel FluC 1 from Lactobacillus johnsonii (strain CNCM I-12250 / La1 / NCC 533).